Consider the following 29-residue polypeptide: Cytochrome b6-f complex subunit 8 (29 aa).

The chain crosses the membrane as a helical span at residues 3-23 (TVSIAWAALMVIFTFSISLVV).

Belongs to the PetN family. In terms of assembly, the 4 large subunits of the cytochrome b6-f complex are cytochrome b6, subunit IV (17 kDa polypeptide, PetD), cytochrome f and the Rieske protein, while the 4 small subunits are PetG, PetL, PetM and PetN. The complex functions as a dimer.

It localises to the plastid. The protein localises to the chloroplast thylakoid membrane. Functionally, component of the cytochrome b6-f complex, which mediates electron transfer between photosystem II (PSII) and photosystem I (PSI), cyclic electron flow around PSI, and state transitions. The protein is Cytochrome b6-f complex subunit 8 of Psilotum nudum (Whisk fern).